A 574-amino-acid chain; its full sequence is Squalene monooxygenase (574 aa).

Residues 1-20 (MWTFLGIATFTYFYKKFGDF) are Cytoplasmic-facing. The segment at 1-100 (MWTFLGIATF…EQLEARRRRK (100 aa)) is interaction with MARCHF6. Residues 21–41 (ITLANREVLLCVLVFLSLGLV) lie within the membrane without spanning it. Topologically, residues 42 to 574 (LSYRCRHRNG…IYSEMKYMVH (533 aa)) are cytoplasmic. The interval 62 to 73 (QFALFSDILSGL) is required for degradation in response to high membrane cholesterol levels. The sufficient for enzyme activity stretch occupies residues 118-574 (TSSQNDPEVI…IYSEMKYMVH (457 aa)). FAD contacts are provided by residues 133 to 134 (VL), 153 to 154 (ER), arginine 161, phenylalanine 166, arginine 234, valine 250, aspartate 408, and methionine 421. The tract at residues 516-574 (PLVLIGHFFAVAIYAVYFCFKSEPWITKPRALLSSGAVLYKACSVIFPLIYSEMKYMVH) is hydrophobic; mediates interaction with membranes.

Belongs to the squalene monooxygenase family. As to quaternary structure, interacts (via N-terminal domain) with MARCHF6. Interacts with SMIM22; this interaction modulates lipid droplet formation. It depends on FAD as a cofactor. Post-translationally, ubiquitinated by MARCHF6 in response to high cholesterol levels in intracellular membranes, leading to proteasomal degradation. In terms of tissue distribution, detected in liver (at protein level).

The protein resides in the microsome membrane. It is found in the endoplasmic reticulum membrane. The enzyme catalyses squalene + reduced [NADPH--hemoprotein reductase] + O2 = (S)-2,3-epoxysqualene + oxidized [NADPH--hemoprotein reductase] + H2O + H(+). It participates in terpene metabolism; lanosterol biosynthesis; lanosterol from farnesyl diphosphate: step 2/3. Its activity is regulated as follows. Inhibited by NB-598 ((E)N-ethyl-N-(6,6-dimethyl-2-hepten-4-ynyl)-3-[(3,3'-bi-thiophen-5-yl)methoxy]benzene-methanamine). Contrary to fungal enzymes, the mammalian enzyme is only slightly inhibited by terbinafine. Inhibited by tellurite, tellurium dioxide, selenite, and selenium dioxide. Its function is as follows. Catalyzes the stereospecific oxidation of squalene to (S)-2,3-epoxysqualene, and is considered to be a rate-limiting enzyme in steroid biosynthesis. The sequence is that of Squalene monooxygenase (SQLE) from Homo sapiens (Human).